Reading from the N-terminus, the 338-residue chain is Aspartate carbamoyltransferase catalytic subunit (338 aa).

Positions 59 and 60 each coordinate carbamoyl phosphate. K87 lines the L-aspartate pocket. Positions 109, 142, and 145 each coordinate carbamoyl phosphate. L-aspartate contacts are provided by R182 and R248. Residues G289 and P290 each contribute to the carbamoyl phosphate site.

This sequence belongs to the aspartate/ornithine carbamoyltransferase superfamily. ATCase family. In terms of assembly, heterododecamer (2C3:3R2) of six catalytic PyrB chains organized as two trimers (C3), and six regulatory PyrI chains organized as three dimers (R2).

The enzyme catalyses carbamoyl phosphate + L-aspartate = N-carbamoyl-L-aspartate + phosphate + H(+). Its pathway is pyrimidine metabolism; UMP biosynthesis via de novo pathway; (S)-dihydroorotate from bicarbonate: step 2/3. Catalyzes the condensation of carbamoyl phosphate and aspartate to form carbamoyl aspartate and inorganic phosphate, the committed step in the de novo pyrimidine nucleotide biosynthesis pathway. In Synechococcus elongatus (strain ATCC 33912 / PCC 7942 / FACHB-805) (Anacystis nidulans R2), this protein is Aspartate carbamoyltransferase catalytic subunit.